The sequence spans 40 residues: Photosystem II reaction center protein J (40 aa).

Residues 8-28 traverse the membrane as a helical segment; sequence IPLWIIGTVTGLLVIGLIGIF.

This sequence belongs to the PsbJ family. PSII is composed of 1 copy each of membrane proteins PsbA, PsbB, PsbC, PsbD, PsbE, PsbF, PsbH, PsbI, PsbJ, PsbK, PsbL, PsbM, PsbT, PsbX, PsbY, PsbZ, Psb30/Ycf12, at least 3 peripheral proteins of the oxygen-evolving complex and a large number of cofactors. It forms dimeric complexes.

The protein localises to the plastid. It is found in the chloroplast thylakoid membrane. Functionally, one of the components of the core complex of photosystem II (PSII). PSII is a light-driven water:plastoquinone oxidoreductase that uses light energy to abstract electrons from H(2)O, generating O(2) and a proton gradient subsequently used for ATP formation. It consists of a core antenna complex that captures photons, and an electron transfer chain that converts photonic excitation into a charge separation. In Ipomoea purpurea (Common morning glory), this protein is Photosystem II reaction center protein J.